The sequence spans 485 residues: Adenosylhomocysteinase (485 aa).

Substrate-binding residues include threonine 64, aspartate 139, and glutamate 205. Position 206–208 (206–208 (TTT)) interacts with NAD(+). Substrate contacts are provided by lysine 235 and aspartate 239. NAD(+) is bound by residues asparagine 240, 269–274 (GYGDVG), glutamate 292, asparagine 327, 348–350 (IGH), and asparagine 397.

This sequence belongs to the adenosylhomocysteinase family. Requires NAD(+) as cofactor.

The enzyme catalyses S-adenosyl-L-homocysteine + H2O = L-homocysteine + adenosine. It functions in the pathway amino-acid biosynthesis; L-homocysteine biosynthesis; L-homocysteine from S-adenosyl-L-homocysteine: step 1/1. In terms of biological role, adenosylhomocysteine is a competitive inhibitor of S-adenosyl-L-methionine-dependent methyl transferase reactions; therefore adenosylhomocysteinase may play a key role in the control of methylations via regulation of the intracellular concentration of adenosylhomocysteine. This is Adenosylhomocysteinase (SAHH) from Nicotiana sylvestris (Wood tobacco).